The primary structure comprises 400 residues: Endoglucanase A (400 aa).

The N-terminal stretch at 1-32 is a signal peptide; it reads MTKTFKKFSIAGLALLFMATAAFAGWSTKASA. The Proton donor role is filled by glutamate 187. The Nucleophile role is filled by glutamate 328.

This sequence belongs to the glycosyl hydrolase 5 (cellulase A) family.

The protein localises to the secreted. The enzyme catalyses Endohydrolysis of (1-&gt;4)-beta-D-glucosidic linkages in cellulose, lichenin and cereal beta-D-glucans.. Strongly inhibited by Hg(2+), Ag(+) and Fe(3+). To a lesser extent, is also inhibited by Pb(2+), Mn(2+), Sn(2+) and Cu(2+). By contrast, Ni(2+), Zn(2+), Co(2+), Ba(2+) and NH(4)(+) do not affect enzyme activity, while 10 mM Ca(2+), and Mg(2+) produce a stimulating effect. Is also strongly inhibited by chemicals such as N-bromosuccinimide and dimethyl(2-dihydroxy-5-nitrobenzyl)sulphonium bromide. Is not affected by N-acetylimidazole. In terms of biological role, endoglucanase with high activity on carboxymethylcellulose (CMC) and lichenan, but not active on Avicel. The protein is Endoglucanase A (celA) of Paenibacillus barcinonensis.